Here is a 216-residue protein sequence, read N- to C-terminus: MSFLFSSRSSKTFKPKKNIPEGSHQYELLKHAEATLGSGNLRQAVMLPEGEDLNEWIAVNTVDFFNQINMLYGTITEFCTEASCPVMSAGPRYEYHWADGTNIKKPIKCSAPKYIDYLMTWVQDQLDDETLFPSKIGVPFPKNFMSVAKTILKRLFRVYAHIYHQHFDSVMQLQEEAHLNTSFKHFIFFVQEFNLIDRRELAPLQELIEKLGSKDR.

Ser2 carries the post-translational modification N-acetylserine. Phosphothreonine is present on residues Thr12 and Thr35. Phosphothreonine; by STK3/MST2 is present on Thr74. Cys79, Cys84, His161, and His166 together coordinate Zn(2+). Residue Thr181 is modified to Phosphothreonine.

The protein belongs to the MOB1/phocein family. Binds STK38 and STK38L. Interacts with LATS1 and LATS2. Forms a tripartite complex with STK38 and STK3/MST2. In terms of processing, phosphorylated by STK3/MST2 and STK4/MST1 and this phosphorylation enhances its binding to LATS1. As to expression, adrenal gland, bone marrow, brain, placenta, prostate, salivary gland, skeletal muscle, testis, thymus, thyroid gland, heart, spinal cord, fetal brain and fetal liver.

In terms of biological role, activator of LATS1/2 in the Hippo signaling pathway which plays a pivotal role in organ size control and tumor suppression by restricting proliferation and promoting apoptosis. The core of this pathway is composed of a kinase cascade wherein STK3/MST2 and STK4/MST1, in complex with its regulatory protein SAV1, phosphorylates and activates LATS1/2 in complex with its regulatory protein MOB1, which in turn phosphorylates and inactivates YAP1 oncoprotein and WWTR1/TAZ. Phosphorylation of YAP1 by LATS1/2 inhibits its translocation into the nucleus to regulate cellular genes important for cell proliferation, cell death, and cell migration. Stimulates the kinase activity of STK38 and STK38L. Acts cooperatively with STK3/MST2 to activate STK38. The polypeptide is MOB kinase activator 1A (Homo sapiens (Human)).